A 119-amino-acid chain; its full sequence is Holo-[acyl-carrier-protein] synthase (119 aa).

Positions 8 and 58 each coordinate Mg(2+).

It belongs to the P-Pant transferase superfamily. AcpS family. Mg(2+) serves as cofactor.

Its subcellular location is the cytoplasm. It carries out the reaction apo-[ACP] + CoA = holo-[ACP] + adenosine 3',5'-bisphosphate + H(+). Its function is as follows. Transfers the 4'-phosphopantetheine moiety from coenzyme A to a Ser of acyl-carrier-protein. This chain is Holo-[acyl-carrier-protein] synthase, found in Bacillus mycoides (strain KBAB4) (Bacillus weihenstephanensis).